The following is a 492-amino-acid chain: 2-succinylbenzoate--CoA ligase (492 aa).

It belongs to the ATP-dependent AMP-binding enzyme family. MenE subfamily.

It carries out the reaction 2-succinylbenzoate + ATP + CoA = 2-succinylbenzoyl-CoA + AMP + diphosphate. It participates in quinol/quinone metabolism; 1,4-dihydroxy-2-naphthoate biosynthesis; 1,4-dihydroxy-2-naphthoate from chorismate: step 5/7. Its pathway is quinol/quinone metabolism; menaquinone biosynthesis. Functionally, converts 2-succinylbenzoate (OSB) to 2-succinylbenzoyl-CoA (OSB-CoA). This chain is 2-succinylbenzoate--CoA ligase, found in Staphylococcus aureus (strain MRSA252).